The following is a 157-amino-acid chain: Ribosome maturation factor RimP (157 aa).

It belongs to the RimP family.

The protein resides in the cytoplasm. Functionally, required for maturation of 30S ribosomal subunits. The protein is Ribosome maturation factor RimP of Enterococcus faecalis (strain ATCC 700802 / V583).